The chain runs to 437 residues: Transcription factor E2F2 (437 aa).

A cyclin A/CDK2 binding region spans residues 65–105 (ATPHGPEGQVVRCLPAGRLPAKRKLDLEGIGRPVVPEFPTP). The DNA-binding element occupies 107–196 (GKCIRVDGLP…KNNIQWVGRG (90 aa)). A leucine-zipper region spans residues 155 to 176 (LNWAAEVLDVQKRRIYDITNVL). Positions 160 to 196 (EVLDVQKRRIYDITNVLEGIQLIRKKAKNNIQWVGRG) match the DEF box motif. Residues 197–289 (MFEDPTRPGK…PDRTEDNLQI (93 aa)) form a dimerization region. The tract at residues 307–368 (VQEPDSPSEE…APPPPSLVPL (62 aa)) is disordered. Over residues 315-330 (EEPLPSTSTLCPSPDS) the composition is skewed to low complexity. Pro residues predominate over residues 351–365 (APAPTPQQAPPPPSL). A transactivation region spans residues 359 to 437 (APPPPSLVPL…SYDLGDLLIN (79 aa)). A retinoblastoma protein binding region spans residues 410–427 (DDYLWGLEAGEGISDLFD).

It belongs to the E2F/DP family. As to quaternary structure, component of the DRTF1/E2F transcription factor complex. Forms heterodimers with DP family members. The E2F2 complex binds specifically hypophosphorylated retinoblastoma protein RB1. During the cell cycle, RB1 becomes phosphorylated in mid-to-late G1 phase, detaches from the DRTF1/E2F complex, rendering E2F transcriptionally active. Viral oncoproteins, notably E1A, T-antigen and HPV E7, are capable of sequestering RB1, thus releasing the active complex. Binds EAPP. Post-translationally, phosphorylated by CDK2 and cyclin A-CDK2 in the S-phase. As to expression, highest level of expression is found in placenta, low levels are found in lung. Found as well in many immortalized cell lines derived from tumor samples.

It is found in the nucleus. In terms of biological role, transcription activator that binds DNA cooperatively with DP proteins through the E2 recognition site, 5'-TTTC[CG]CGC-3' found in the promoter region of a number of genes whose products are involved in cell cycle regulation or in DNA replication. The DRTF1/E2F complex functions in the control of cell-cycle progression from g1 to s phase. E2F2 binds specifically to RB1 in a cell-cycle dependent manner. This Homo sapiens (Human) protein is Transcription factor E2F2 (E2F2).